The chain runs to 397 residues: MAQPPRPAEEYDDDVQEDEDELKEGELDDDESHEAASEGGEAAAGDEEAEDDEQDEEDGDEDSQPWAGLNRLPERDDMLDILNELRAEGRKQLTVLLLGKSSVGKSSLINSLLGEAVVRVQAFKLQADTDITTTVVRQVAVGNSEVDGFRLKLIDTCGLEDPEAGDTVNLGALSKIAEDVRGVGIDVVLYCDRLDLYRVDPLDKAIIDAISSTFGRGIWRRTVVALTHANLVQTPPGTDYDSFVNGRVRLIRGAVRGPLFFRPSLPVALVENSETCPVSSESGFRVLPDGEPWLVALVSQLVDMAAARRRPYKYHPRLSSKPSHRFRWLLPVAIAAEVLFYRRFLHPRLDDNQRRVEREEERVWALRGQQRRALGLHRPHRPDKDAAWRLEQMYDDD.

The tract at residues 1–72 (MAQPPRPAEE…SQPWAGLNRL (72 aa)) is disordered. 2 stretches are compositionally biased toward acidic residues: residues 10–32 (EYDD…DDES) and 44–63 (AGDE…DEDS). The 232-residue stretch at 90–321 (RKQLTVLLLG…YKYHPRLSSK (232 aa)) folds into the AIG1-type G domain. The G1 stretch occupies residues 99–106 (GKSSVGKS). GTP-binding positions include 102 to 107 (SVGKSS) and 121 to 126 (QAFKLQ). A Mg(2+)-binding site is contributed by S106. Residues 121–124 (QAFK) are homodimerization. The tract at residues 126 to 130 (QADTD) is G2. The G3 stretch occupies residues 155–158 (DTCG). Residues 193 to 198 (RLDLYR) are homodimerization. The interval 227 to 230 (THAN) is G4. Residues H228 and 271–272 (EN) each bind GTP. The tract at residues 271 to 273 (ENS) is G5. The helical transmembrane segment at 329 to 349 (LLPVAIAAEVLFYRRFLHPRL) threads the bilayer. An AKR2A-binding sequence (ABS) required for chloroplast outer envelope membrane targeting motif is present at residues 350-358 (DDNQRRVER).

The protein belongs to the TRAFAC class TrmE-Era-EngA-EngB-Septin-like GTPase superfamily. AIG1/Toc34/Toc159-like paraseptin GTPase family. TOC34 subfamily. In terms of assembly, homodimer, heterodimer with other TOC proteins, and monomer. Part of the TOC core complex that includes 1 protein for the specific recognition of transit peptides surrounded by a ring composed of four proteins forming translocation channels, and four to five GTP-binding proteins providing energy. This core complex can interact with components of the TIC complex to form a larger import complex. Interacts with ARSA1. Requires Mg(2+) as cofactor.

It localises to the plastid. The protein resides in the chloroplast outer membrane. Functionally, GTPase involved in protein precursor import into chloroplasts. Seems to recognize chloroplast-destined precursor proteins and regulate their presentation to the translocation channel through GTP hydrolysis. Functions as an essential component of the outer chloroplast membrane translocon (TOC) complex, which, in turn, catalyzes the import of nucleus-encoded precursor polypeptides from the cytoplasm to the chloroplast. In Chlamydomonas reinhardtii (Chlamydomonas smithii), this protein is Translocase of chloroplast 34 homolog, chloroplastic.